The following is a 190-amino-acid chain: Xanthine phosphoribosyltransferase 1 (190 aa).

2 residues coordinate xanthine: leucine 20 and asparagine 27. Alanine 128–alanine 132 is a 5-phospho-alpha-D-ribose 1-diphosphate binding site. Lysine 156 provides a ligand contact to xanthine.

Belongs to the purine/pyrimidine phosphoribosyltransferase family. Xpt subfamily. In terms of assembly, homodimer.

It is found in the cytoplasm. It catalyses the reaction XMP + diphosphate = xanthine + 5-phospho-alpha-D-ribose 1-diphosphate. Its pathway is purine metabolism; XMP biosynthesis via salvage pathway; XMP from xanthine: step 1/1. In terms of biological role, converts the preformed base xanthine, a product of nucleic acid breakdown, to xanthosine 5'-monophosphate (XMP), so it can be reused for RNA or DNA synthesis. This chain is Xanthine phosphoribosyltransferase 1, found in Clostridium botulinum (strain ATCC 19397 / Type A).